The sequence spans 370 residues: Glutamine synthetase (370 aa).

Residue A2 is modified to N-acetylalanine. S5 is subject to Phosphoserine. Residues 24 to 103 (IIAEYVWIDG…VLAACYNNDG (80 aa)) enclose the GS beta-grasp domain. In terms of domain architecture, GS catalytic spans 110–370 (HRHEAAKLFA…MTKEFERESS (261 aa)). Glycyl lysine isopeptide (Lys-Gly) (interchain with G-Cter in ubiquitin) cross-links involve residues K283, K324, and K363.

The protein belongs to the glutamine synthetase family. As to quaternary structure, homooctamer.

Its subcellular location is the cytoplasm. It catalyses the reaction L-glutamate + NH4(+) + ATP = L-glutamine + ADP + phosphate + H(+). This chain is Glutamine synthetase (GLN1), found in Saccharomyces cerevisiae (strain ATCC 204508 / S288c) (Baker's yeast).